The chain runs to 412 residues: Propionate kinase (412 aa).

This sequence belongs to the acetokinase family. PduW subfamily.

Its subcellular location is the cytoplasm. It carries out the reaction propanoate + ATP = propanoyl phosphate + ADP. It functions in the pathway polyol metabolism; 1,2-propanediol degradation. Works with phosphate acetyltransferase (pta) to capture exogenous propionate and regenerate propionyl-CoA during degradation of 1,2-propanediol (1,2-PD). The polypeptide is Propionate kinase (Yersinia enterocolitica serotype O:8 / biotype 1B (strain NCTC 13174 / 8081)).